A 149-amino-acid polypeptide reads, in one-letter code: Large-conductance mechanosensitive channel (149 aa).

A run of 2 helical transmembrane segments spans residues 14 to 34 and 85 to 105; these read VVDM…VNTL and GLFI…YLLV.

It belongs to the MscL family. In terms of assembly, homopentamer.

The protein resides in the cell inner membrane. In terms of biological role, channel that opens in response to stretch forces in the membrane lipid bilayer. May participate in the regulation of osmotic pressure changes within the cell. The chain is Large-conductance mechanosensitive channel from Chlorobium phaeovibrioides (strain DSM 265 / 1930) (Prosthecochloris vibrioformis (strain DSM 265)).